Here is a 299-residue protein sequence, read N- to C-terminus: Tyrosine recombinase XerC (299 aa).

The region spanning 2-88 (SALQPLIDTY…ALRSFLDYLV (87 aa)) is the Core-binding (CB) domain. In terms of domain architecture, Tyr recombinase spans 109–289 (PLPKNVSVDD…DFQHLSKIYD (181 aa)). Active-site residues include Arg-148, Lys-172, His-241, Arg-244, and His-267. The active-site O-(3'-phospho-DNA)-tyrosine intermediate is the Tyr-276.

This sequence belongs to the 'phage' integrase family. XerC subfamily. In terms of assembly, forms a cyclic heterotetrameric complex composed of two molecules of XerC and two molecules of XerD.

Its subcellular location is the cytoplasm. Functionally, site-specific tyrosine recombinase, which acts by catalyzing the cutting and rejoining of the recombining DNA molecules. The XerC-XerD complex is essential to convert dimers of the bacterial chromosome into monomers to permit their segregation at cell division. It also contributes to the segregational stability of plasmids. The sequence is that of Tyrosine recombinase XerC from Psychromonas ingrahamii (strain DSM 17664 / CCUG 51855 / 37).